The sequence spans 428 residues: 3-phosphoshikimate 1-carboxyvinyltransferase (428 aa).

Positions 22, 23, and 27 each coordinate 3-phosphoshikimate. Lys22 contributes to the phosphoenolpyruvate binding site. Phosphoenolpyruvate-binding residues include Gly96 and Arg124. 3-phosphoshikimate-binding residues include Ser170, Ser171, Gln172, Ser198, Asp314, Asn337, and Lys341. Gln172 is a phosphoenolpyruvate binding site. The active-site Proton acceptor is the Asp314. Phosphoenolpyruvate-binding residues include Arg345, Arg387, and Lys412.

It belongs to the EPSP synthase family. Monomer.

It localises to the cytoplasm. It carries out the reaction 3-phosphoshikimate + phosphoenolpyruvate = 5-O-(1-carboxyvinyl)-3-phosphoshikimate + phosphate. The protein operates within metabolic intermediate biosynthesis; chorismate biosynthesis; chorismate from D-erythrose 4-phosphate and phosphoenolpyruvate: step 6/7. Functionally, catalyzes the transfer of the enolpyruvyl moiety of phosphoenolpyruvate (PEP) to the 5-hydroxyl of shikimate-3-phosphate (S3P) to produce enolpyruvyl shikimate-3-phosphate and inorganic phosphate. This is 3-phosphoshikimate 1-carboxyvinyltransferase from Vibrio vulnificus (strain YJ016).